The following is a 3148-amino-acid chain: MATMEKLMKAFESLKSFQQQQGPPTAEEIVQRQKKEQATTKKDRVSHCLTICENIVAQSLRTSPEFQKLLGIAMEMFLLCSDDSESDVRMVADECLNRIIKALMDSNLPRLQLELYKEIKKNGASRSLRAALWRFAELAHLIRPQKCRPYLVNLLPCLTRITKRQEETIQETLAAAMPKIMAALGHFANDGEIKMLLKSFVANLKSSSPTIRRTAASSAVSVCQHSRRTSYFYTWLLNVLLGLLVPVDEEHHSHLILGVLLTLRYLMPLLQQQVNTISLKGSFGVMQKEADVQPAPEQLLQVYELTLHYTQHWDHNVVTAALELLQQTLRTPPPELLHVLITAGSIQHASVFRQDIESRARSGSILELIAGGGSTCSPLLHRKHRGKMLSGEEDALEDDPEKTDVTTGYFTAVGADNSSAAQVDIITQQPRSSQHTIQPGDSVDLSASSEQGGRGGGASASDTPESPNDEEDMLSRSSSCGANITPETVEDATPENPAQEGRPVGGSGAYDHSLPPSDSSQTTTEGPDSAVTPSDVAELVLDGSESQYSGMQIGTLQDEEDEGTATSSQEDPPDPFLRSALALSKPHLFESRGHNRQGSDSSVDRFIPKDEPPEPEPDNKMSRIKGAIGHYTDRGAEPVVHCVRLLSASFLLTGQKNGLTPDRDVRVSVKALAVSCVGAAAALHPEAFFNSLYLEPLDGLRAEEQQYISDVLGFIDHGDPQIRGATAILCAAIIQAALSKMRYNIHSWLASVQSKTGNPLSLVDLVPLLQKALKDESSVTCKMACSAVRHCIMSLCGSTLSELGLRLVVDLFALKDSSYWLVRTELLETLAEMDFRLVNFLERKSEALHKGEHHYTGRLRLQERVLNDVVIQLLGDDDPRVRHVAASAVSRLVSRLFFDCDQGQADPVVAIARDQSSVYLQLLMHETQPPSQLTVSTITRTYRGFNLSNNVADVTVENNLSRVVTAVSHAFTSSTSRALTFGCCEALCLLAVHFPICTWTTGWHCGHISSQSSFSSRVGRSRGRTLSVSQSGSTPASSTTSSAVDPERRTLTVGTANMVLSLLSSAWFPLDLSAHQDALLLCGNLLAAVAPKCLRNPWAGEDDSSSSSTNTSGGTHKMEEPWAALSDRAFVAMVEQLFSHLLKVLNICAHVLDDTPPGPPVKATLPSLTNTPSLSPIRRKGKDKDAVDSSSAPLSPKKGNEANTGRPTESTGSTAVHKSTTLGSFYHLPPYLKLYDVLKATHANFKVMLDLHSNQEKFGSFLRAALDVLSQLLELATLNDINKCVEEILGYLKSCFSREPTMATVCVQQLLKTLFGTNLASQYEGFLSGPSRSQGKALRLGSSSLRPGLYHYCFMAPYTHFTQALADASLRNMVQAEHEQDTSGWFDVMQKTSNQLRSNIANAARHRGDKNAIHNHIRLFEPLVIKALKQYTTSTSVALQRQVLDLLAQLVQLRVNYCLLDSDQVFIGFVLKQFEYIEVGQFRDSEAIIPNIFFFLVLLSYERYHSKQIISIPKIIQLCDGIMASGRKAVTHAIPALQPIVHDLFVLRGSNKADAGKELETQKEVVVSMLLRLVQYHQVLEMFILVLQQCHKENEDKWKRLSRQIADVILPMIAKQQMHLDSPEALGVLNTLFETVAPSSLRPVDMLLKSMFTTPVTMASVATVQLWVSGILAVLRVLVSQSTEDIVLSRIHELSLSPHLLSCHTIKRLQQPNLSPSDQPAGDGQQNQEPNGEAQKSLPEETFARFLIQLVGVLLDDISSRHVKVDITEQQHTFYCQQLGTLLMCLIHVFKSGMFRRITVAASRLLKGESGSGHSGIEFYPLEGLNSMVHCLITTHPSLVLLWCQVLLIIDYTNYSWWTEVHQTPKGHSLSCTKLLSPHSSGEGEEKPETRLAMINREIVRRGALILFCDYVCQNLHDSEHLTWLIVNHVRDLIDLSHEPPVQDFISAVHRNSAASGLFIQAIQSRCDNLNSPTMLKKTLQCLEGIHLSQSGSLLMLYVDKLLSTPFRVLARMVDTLACRRVEMLLAETLQNSVAQLPLEELHRIQEYLQTSGLAQRHQRFYSLLDRFRATVSDTSSPSTPVTSHPLDGDPPPAPELVIADKEWYVALVKSQCCLHGDVSLLETTELLTKLPPADLLSVMSCKEFNLSLLCPCLSLGVQRLLRGQGSLLLETALQVTLEQLAGATGLLPVPHHSFIPTSHPQSHWKQLAEVYGDPGFYSRVLSLCRALSQYLLTVKQLPSSLRIPSDKEHLITTFTCAATEVVVWHLLQDQLPLSVDLQWALSCLCLALQQPCVWNKLSTPEYNTHTCSLIYCLHHIILAVAVSPGDQLLHPERKKTKALRHSDDEDQVDSVHDNHTLEWQACEIMAELVEGLQSVLSLGHHRNTAFPAFLTPTLRNIIISLSRLPLVNSHTRVPPLVWKLGWSPQPGGEFGTTLPEIPVDFLQEKDVFREFLYRINTLGWSNRTQFEETWATLLGVLVTQPITMDQEEETQQEEDLERTQLNVLAVQAITSLVLSAMTLPTAGNPAVSCLEQQPRNKSLKALETRFGRKLAVIRGEVEREIQALVSKRDNVHTYHPYHAWDPVPSLSAASPGTLISHEKLLLQINTERELGNMDYKLGQVSIHSVWLGNNITPLREEEWGEDEDDEADPPAPTSPPLSPINSRKHRAGVDIHSCSQFLLELYSQWVIPGSPSNRKTPTILISEVVRSLLAVSDLFTERNQFDMMFSTLMELQKLHPPEDEILNQYLVPAICKAAAVLGMDKAIAEPVCRLLETTLRSTHLPSRMGALHGVLYVLECDLLDDTAKQLIPTVSEYLLSNLRAIAHCVNLHNQQHVLVMCAVAFYMMENYPLDVGTEFMAGIIQLCGVMVSASEDSTPSIIYHCVLRGLERLLLSEQLSRVDGEALVKLSVDRVNMPSPHRAMAALGLMLTCMYTGKEKASPAARSAHSDPQVPDSESIIVAMERVSVLFDRIRKGLPSEARVVARILPQFLDDFFPPQDIMNKVIGEFLSNQQPYPQFMATVVYKVFQTLHATGQSSMVRDWVLLSLSNFTQRTPVAMAMWSLSCFFVSASTSQWISALLPHVISRMGSSDVVDVNLFCLVAMDFYRHQIDEELDRRAFQSVFETVASPGSPYFQLLACLQSIHQDKSL.

HEAT repeat units lie at residues 149-186 (PYLVNLLPCLTRITKRQEETIQETLAAAMPKIMAALGH) and 191-228 (GEIKMLLKSFVANLKSSSPTIRRTAASSAVSVCQHSRR). 3 stretches are compositionally biased toward polar residues: residues 428–451 (QQPRSSQHTIQPGDSVDLSASSEQ), 475–486 (SRSSSCGANITP), and 516–526 (PSDSSQTTTEG). Disordered stretches follow at residues 428–532 (QQPR…SAVT) and 557–622 (QDEE…NKMS). Residues 602 to 621 (SVDRFIPKDEPPEPEPDNKM) show a composition bias toward basic and acidic residues. 2 HEAT repeats span residues 760–797 (LSLVDLVPLLQKALKDESSVTCKMACSAVRHCIMSLCG) and 861–898 (LQERVLNDVVIQLLGDDDPRVRHVAASAVSRLVSRLFF). Composition is skewed to low complexity over residues 1025–1042 (TLSVSQSGSTPASSTTSS) and 1105–1115 (SSSSTNTSGGT). Disordered regions lie at residues 1025 to 1047 (TLSVSQSGSTPASSTTSSAVDPE), 1098 to 1117 (WAGEDDSSSSSTNTSGGTHK), and 1158 to 1215 (GPPV…GSTA). Residues 1201–1215 (EANTGRPTESTGSTA) are compositionally biased toward polar residues. An HEAT 5 repeat occupies 1419–1456 (LFEPLVIKALKQYTTSTSVALQRQVLDLLAQLVQLRVN). Positions 1712–1730 (PNLSPSDQPAGDGQQNQEP) are enriched in polar residues. 2 disordered regions span residues 1712–1735 (PNLSPSDQPAGDGQQNQEPNGEAQ) and 2072–2091 (VSDTSSPSTPVTSHPLDGDP). Residues 2072-2084 (VSDTSSPSTPVTS) are compositionally biased toward low complexity. Positions 2398–2407 (IIISLSRLPL) match the Nuclear export signal motif. Residues 2639–2649 (EWGEDEDDEAD) show a composition bias toward acidic residues. The interval 2639–2664 (EWGEDEDDEADPPAPTSPPLSPINSR) is disordered. Residues 2650 to 2659 (PPAPTSPPLS) are compositionally biased toward pro residues.

The protein belongs to the huntingtin family.

It is found in the cytoplasm. Its subcellular location is the nucleus. Functionally, may play a role in microtubule-mediated transport or vesicle function. The chain is Huntingtin (htt) from Takifugu rubripes (Japanese pufferfish).